The primary structure comprises 305 residues: UDP-3-O-acyl-N-acetylglucosamine deacetylase (305 aa).

Residues H78, H237, and D241 each coordinate Zn(2+). The Proton donor role is filled by H264.

It belongs to the LpxC family. It depends on Zn(2+) as a cofactor.

The enzyme catalyses a UDP-3-O-[(3R)-3-hydroxyacyl]-N-acetyl-alpha-D-glucosamine + H2O = a UDP-3-O-[(3R)-3-hydroxyacyl]-alpha-D-glucosamine + acetate. It participates in glycolipid biosynthesis; lipid IV(A) biosynthesis; lipid IV(A) from (3R)-3-hydroxytetradecanoyl-[acyl-carrier-protein] and UDP-N-acetyl-alpha-D-glucosamine: step 2/6. Its function is as follows. Catalyzes the hydrolysis of UDP-3-O-myristoyl-N-acetylglucosamine to form UDP-3-O-myristoylglucosamine and acetate, the committed step in lipid A biosynthesis. The protein is UDP-3-O-acyl-N-acetylglucosamine deacetylase of Paraburkholderia phymatum (strain DSM 17167 / CIP 108236 / LMG 21445 / STM815) (Burkholderia phymatum).